The primary structure comprises 181 residues: Crossover junction endodeoxyribonuclease RuvC (181 aa).

Active-site residues include Asp7, Glu67, and Asp139. Residues Asp7, Glu67, and Asp139 each contribute to the Mg(2+) site.

It belongs to the RuvC family. In terms of assembly, homodimer which binds Holliday junction (HJ) DNA. The HJ becomes 2-fold symmetrical on binding to RuvC with unstacked arms; it has a different conformation from HJ DNA in complex with RuvA. In the full resolvosome a probable DNA-RuvA(4)-RuvB(12)-RuvC(2) complex forms which resolves the HJ. Mg(2+) is required as a cofactor.

It is found in the cytoplasm. It catalyses the reaction Endonucleolytic cleavage at a junction such as a reciprocal single-stranded crossover between two homologous DNA duplexes (Holliday junction).. Its function is as follows. The RuvA-RuvB-RuvC complex processes Holliday junction (HJ) DNA during genetic recombination and DNA repair. Endonuclease that resolves HJ intermediates. Cleaves cruciform DNA by making single-stranded nicks across the HJ at symmetrical positions within the homologous arms, yielding a 5'-phosphate and a 3'-hydroxyl group; requires a central core of homology in the junction. The consensus cleavage sequence is 5'-(A/T)TT(C/G)-3'. Cleavage occurs on the 3'-side of the TT dinucleotide at the point of strand exchange. HJ branch migration catalyzed by RuvA-RuvB allows RuvC to scan DNA until it finds its consensus sequence, where it cleaves and resolves the cruciform DNA. This chain is Crossover junction endodeoxyribonuclease RuvC, found in Cupriavidus taiwanensis (strain DSM 17343 / BCRC 17206 / CCUG 44338 / CIP 107171 / LMG 19424 / R1) (Ralstonia taiwanensis (strain LMG 19424)).